A 670-amino-acid polypeptide reads, in one-letter code: Receptor for retinol uptake STRA6 (670 aa).

At 1–50 the chain is on the extracellular side; sequence MESQASENGSQTSSGVTDDYSSWYIEEPLGAEEVQPEGVIPLCQLTAPPA. N-linked (GlcNAc...) asparagine glycosylation occurs at Asn-8. A helical transmembrane segment spans residues 51-71; it reads LLHACLASLSFLVLLLLALLV. The Cytoplasmic segment spans residues 72–97; that stretch reads RRRRLWPRCGHRGLGLPSPVDFLAGD. A helical membrane pass occupies residues 98–118; that stretch reads LSWTVPAAVFVVLFSNLCLLL. Topologically, residues 119-144 are extracellular; it reads PDENPLPFLNLTAASSPDGEMETSRG. N-linked (GlcNAc...) asparagine glycosylation occurs at Asn-128. The helical transmembrane segment at 145 to 165 threads the bilayer; that stretch reads PWKLLALLYYPALYYPLAACA. Topologically, residues 166 to 168 are cytoplasmic; that stretch reads SAG. The chain crosses the membrane as a helical span at residues 169 to 189; sequence HQAAFLLGTVLSWAHFGVQVW. The Extracellular portion of the chain corresponds to 190–205; it reads QKAECPQDPKIYKHYS. A helical transmembrane segment spans residues 206–226; it reads LLASLPLLLGLGFLSLWYPVQ. The Cytoplasmic portion of the chain corresponds to 227–296; that stretch reads LVQSLRHRTG…PQPGFRLPLK (70 aa). The tract at residues 235-294 is interaction with RBP1; sequence TGAGSQGLQTSYSEKYLRTLLCPKKLDSCSHPASKRSLLSRAWAFSHHSIYTPQPGFRLP. The helical transmembrane segment at 297–317 threads the bilayer; that stretch reads LVISATLTGTATYQVALLLLV. At 318-368 the chain is on the extracellular side; it reads SVVPTVQKVRAGINTDVSYLLAGFGIVLSEDRQEVVELVKHHLWTVEACYI. The chain crosses the membrane as a helical span at residues 369–389; it reads SALVLSCASTFLLLIRSLRTH. The Cytoplasmic portion of the chain corresponds to 390-423; that stretch reads RANLQALHRGAALDLDPPLQSIHPSRQAIVSWMS. Residues 424–444 form a helical membrane-spanning segment; it reads FCAYQTAFSCLGLLVQQVIFF. Topologically, residues 445 to 474 are extracellular; it reads LGTTSLAFLVFVPLLHGRNLLLLRSLESTW. Residues 475 to 495 traverse the membrane as a helical segment; that stretch reads PFWLTVALAVILQNIAANWIF. Over 496-510 the chain is Cytoplasmic; the sequence is LRTHHGYPELTNRRM. Positions 511–548 form an intramembrane region, helical; it reads LCVATFLLFPINMLVGAIMAVWRVLISSLYNTVHLGQM. The Cytoplasmic portion of the chain corresponds to 549 to 670; it reads DLSLLPQRAA…TSAKANGTQP (122 aa). Tyr-644 carries the post-translational modification Phosphotyrosine.

As to quaternary structure, homodimer. Interacts with JAK2 and STAT5. Interacts (via extracellular domains) with RBP4. Interacts (via cytoplasmic domains) with RBP1. Phosphorylated on tyrosine residues in response to RBP4 binding. Phosphorylation requires the presence of LRAT, suggesting it may be triggered by the uptake of retinol that is then metabolized within the cell to retinoids that function as signaling molecules. As to expression, widely expressed in the embryo. Detected in adult in the retinal pigment epithelium in the eye. In the adult, is highly expressed in cells that compose blood-organ barriers in the brain (choroid plexus and the brain microvascular), in testis (the basal layer of the seminiferous epithelium), in the yolk sac, and in the chorioallantoic placenta. Detected in white adipose tissue and skeletal muscle, but not in liver (at protein level). Widely expressed in adult, with high expression levels in the eye. Detected in brain, cerebellum, testis, pituitary, pancreas, kidney, spleen, and female genital tract; and at very low levels in heart and lung. Not detected in liver.

The protein localises to the cell membrane. Its function is as follows. Functions as a retinol transporter. Accepts all-trans retinol from the extracellular retinol-binding protein RBP4, facilitates retinol transport across the cell membrane, and then transfers retinol to the cytoplasmic retinol-binding protein RBP1. Retinol uptake is enhanced by LRAT, an enzyme that converts retinol to all-trans retinyl esters, the storage forms of vitamin A. Contributes to the activation of a signaling cascade that depends on retinol transport and LRAT-dependent generation of retinol metabolites that then trigger activation of JAK2 and its target STAT5, and ultimately increase the expression of SOCS3 and inhibit cellular responses to insulin. Important for the homeostasis of vitamin A and its derivatives, such as retinoic acid and 11-cis-retinal. STRA6-mediated transport is particularly important in the eye, and under conditions of dietary vitamin A deficiency. Does not transport retinoic acid. The protein is Receptor for retinol uptake STRA6 (Stra6) of Mus musculus (Mouse).